A 56-amino-acid chain; its full sequence is uncharacterized protein (56 aa).

Residues 2–22 traverse the membrane as a helical segment; the sequence is ILYIIVAISILLNIILGIKVI.

Its subcellular location is the membrane. This is an uncharacterized protein from Methanocaldococcus jannaschii (strain ATCC 43067 / DSM 2661 / JAL-1 / JCM 10045 / NBRC 100440) (Methanococcus jannaschii).